A 398-amino-acid polypeptide reads, in one-letter code: uncharacterized protein (398 aa).

The next 6 membrane-spanning stretches (helical) occupy residues 37-57, 92-112, 122-142, 186-206, 228-248, and 268-288; these read LVIL…FVQF, IFNA…FIFG, LLTL…SYIP, LFYG…ILII, IGGI…VIGT, and FGVA…NIVL.

It is found in the cell membrane. This is an uncharacterized protein from Mycoplasma genitalium (strain ATCC 33530 / DSM 19775 / NCTC 10195 / G37) (Mycoplasmoides genitalium).